Here is a 481-residue protein sequence, read N- to C-terminus: PTS system N-acetylmuramic acid-specific EIIBC component (481 aa).

Positions 1 to 89 constitute a PTS EIIB type-1 domain; the sequence is MAKITQTMMA…NALIESGDNV (89 aa). Catalysis depends on C28, which acts as the Phosphocysteine intermediate; for EIIB activity. The PTS EIIC type-1 domain maps to 122-481; that stretch reads SKFATIFTPL…FFGCKDVDLS (360 aa). Transmembrane regions (helical) follow at residues 124–144, 165–185, 190–210, 225–245, 263–283, 307–327, 342–362, 376–396, 406–426, and 448–468; these read FATI…LLGI, LVAY…ILIG, QAFG…VLGY, FFGF…AAIL, MILT…LIIM, AAIL…QGFV, LFPI…ALYA, GAII…VTLP, IGGA…LPVG, and IFAG…VGFA.

The protein resides in the cell inner membrane. The enzyme catalyses N-acetyl-beta-D-muramate(out) + N(pros)-phospho-L-histidyl-[protein] = N-acetyl-beta-D-muramate 6-phosphate(in) + L-histidyl-[protein]. Functionally, the phosphoenolpyruvate-dependent sugar phosphotransferase system (sugar PTS), a major carbohydrate active transport system, catalyzes the phosphorylation of incoming sugar substrates concomitantly with their translocation across the cell membrane. This system is involved in N-acetylmuramic acid (MurNAc) transport, yielding cytoplasmic MurNAc-6-P. Is also able to take up anhydro-N-acetylmuramic acid (anhMurNAc), but cannot phosphorylate the carbon 6, probably because of the 1,6-anhydro ring. The polypeptide is PTS system N-acetylmuramic acid-specific EIIBC component (murP) (Vibrio cholerae serotype O1 (strain ATCC 39315 / El Tor Inaba N16961)).